Here is a 229-residue protein sequence, read N- to C-terminus: NAD-dependent protein deacylase (229 aa).

The Deacetylase sirtuin-type domain maps to 1-227 (MKNLVILSGA…QDLMPKLIEM (227 aa)). 9–28 (GAGISAESGIKTFRDADGLW) is an NAD(+) binding site. 2 residues coordinate substrate: Tyr-53 and Arg-56. 86-89 (QNVD) is an NAD(+) binding site. Residue His-104 is the Proton acceptor of the active site. Position 169 to 171 (169 to 171 (GTS)) interacts with NAD(+).

Belongs to the sirtuin family. Class III subfamily.

The protein resides in the cytoplasm. The enzyme catalyses N(6)-acetyl-L-lysyl-[protein] + NAD(+) + H2O = 2''-O-acetyl-ADP-D-ribose + nicotinamide + L-lysyl-[protein]. It catalyses the reaction N(6)-succinyl-L-lysyl-[protein] + NAD(+) + H2O = 2''-O-succinyl-ADP-D-ribose + nicotinamide + L-lysyl-[protein]. Functionally, NAD-dependent lysine deacetylase and desuccinylase that specifically removes acetyl and succinyl groups on target proteins. Modulates the activities of several proteins which are inactive in their acylated form. This is NAD-dependent protein deacylase from Helicobacter pylori (strain ATCC 700392 / 26695) (Campylobacter pylori).